The chain runs to 384 residues: Nodal homolog 2-B (384 aa).

The N-terminal stretch at 1-18 (MASLGAILLFAIASLMHG) is a signal peptide. A propeptide spanning residues 19–283 (RPIHSDRKGA…RVADARRHRR (265 aa)) is cleaved from the precursor. N71, N173, and N344 each carry an N-linked (GlcNAc...) asparagine glycan. A disulfide bridge connects residues C306 and C372.

The protein belongs to the TGF-beta family. As to quaternary structure, homodimer; disulfide-linked. Forms heterodimers with the TGF-beta family member derriere. Interacts with tsku; enhances nodal2 activity.

Its subcellular location is the secreted. Its function is as follows. Cooperation and regulatory loops of multiple nodals are essential for mesendoderm patterning in early embryos. Essential for mesoderm formation and axial patterning during embryonic development. Activates the activin-like signaling pathway to induce dorsal and ventral mesoderm in animal cap ectoderm. In addition, also dorsalizes ventral marginal zone (VMZ) tissues during gastrulation. Induces muscle actin. Appears to act as both a short-range and long-range morphogen. The unprocessed protein inhibits bmp- and wnt-signaling. In Xenopus laevis (African clawed frog), this protein is Nodal homolog 2-B (nodal2-b).